Reading from the N-terminus, the 698-residue chain is Auxin response factor 22 (698 aa).

The segment at residues 128-230 is a DNA-binding region (TF-B3); that stretch reads FAKTLTQSDA…ELCVGIRRAK (103 aa). A compositionally biased stretch (polar residues) spans 549–577; that stretch reads TSSGSTETLSPGVTGNSSPNGNAHKTGNA. Positions 549 to 579 are disordered; the sequence is TSSGSTETLSPGVTGNSSPNGNAHKTGNASD. Positions 603 to 683 constitute a PB1 domain; that stretch reads AGHCKVFMES…RRLTIIAGDR (81 aa).

It belongs to the ARF family. As to quaternary structure, homodimers and heterodimers. Expressed in roots, culms, leaves and young panicles.

It is found in the nucleus. In terms of biological role, auxin response factors (ARFs) are transcriptional factors that bind specifically to the DNA sequence 5'-TGTCTC-3' found in the auxin-responsive promoter elements (AuxREs). The chain is Auxin response factor 22 (ARF22) from Oryza sativa subsp. japonica (Rice).